The chain runs to 123 residues: Small ribosomal subunit protein uS12 (123 aa).

Position 89 is a 3-methylthioaspartic acid (aspartate 89).

This sequence belongs to the universal ribosomal protein uS12 family. As to quaternary structure, part of the 30S ribosomal subunit. Contacts proteins S8 and S17. May interact with IF1 in the 30S initiation complex.

Functionally, with S4 and S5 plays an important role in translational accuracy. Its function is as follows. Interacts with and stabilizes bases of the 16S rRNA that are involved in tRNA selection in the A site and with the mRNA backbone. Located at the interface of the 30S and 50S subunits, it traverses the body of the 30S subunit contacting proteins on the other side and probably holding the rRNA structure together. The combined cluster of proteins S8, S12 and S17 appears to hold together the shoulder and platform of the 30S subunit. In Orientia tsutsugamushi (strain Boryong) (Rickettsia tsutsugamushi), this protein is Small ribosomal subunit protein uS12.